The chain runs to 356 residues: Histidinol-phosphate aminotransferase (356 aa).

The residue at position 214 (lysine 214) is an N6-(pyridoxal phosphate)lysine.

Belongs to the class-II pyridoxal-phosphate-dependent aminotransferase family. Histidinol-phosphate aminotransferase subfamily. In terms of assembly, homodimer. Requires pyridoxal 5'-phosphate as cofactor.

It carries out the reaction L-histidinol phosphate + 2-oxoglutarate = 3-(imidazol-4-yl)-2-oxopropyl phosphate + L-glutamate. It functions in the pathway amino-acid biosynthesis; L-histidine biosynthesis; L-histidine from 5-phospho-alpha-D-ribose 1-diphosphate: step 7/9. The protein is Histidinol-phosphate aminotransferase of Escherichia coli O17:K52:H18 (strain UMN026 / ExPEC).